The sequence spans 296 residues: MELANTLRQDGESRGGVLAHLERLETQVSKSRKKLEEPQNAQALEARIHELKRLRDKLRAEVKQRQARVKASTANVEPDQILEISEQEILERKQENMKAILQAYRFTGISGKLTSRGVCVCISTAFEGNLLDSYFVDLVMEKPLWIHHHSVPVFIPLEEISAKYLQTNTRHFLFVLWEYLNAYSGRKYQADRLQSDFAAFLVGPLQRNSLCNLLSFTYKVKPEGQSFPFCARLLYKDLTTTLPTDVTVTSQGTEALPSTWEEQRAAHENLFFTKPLHQVFTSFAKKGEKLDMSLVS.

A coiled-coil region spans residues 17–105; sequence VLAHLERLET…NMKAILQAYR (89 aa).

Belongs to the CENP-O/MCM21 family. Component of the CENPA-CAD complex, composed of CENPI, CENPK, CENPL, CENPO, CENPP, CENPQ, CENPR and CENPS. The CENPA-CAD complex interacts with the CENPA-NAC complex, at least composed of CENPA, CENPC, CENPH, CENPM, CENPN, CENPT and CENPU.

Its subcellular location is the nucleus. The protein localises to the chromosome. It is found in the centromere. It localises to the kinetochore. Its function is as follows. Component of the CENPA-CAD (nucleosome distal) complex, a complex recruited to centromeres which is involved in assembly of kinetochore proteins, mitotic progression and chromosome segregation. May be involved in incorporation of newly synthesized CENPA into centromeres via its interaction with the CENPA-NAC complex. Modulates the kinetochore-bound levels of NDC80 complex. This chain is Centromere protein O (CENPO), found in Bos taurus (Bovine).